Here is a 382-residue protein sequence, read N- to C-terminus: Mannitol-1-phosphate 5-dehydrogenase (382 aa).

3-14 (ALHFGAGNIGRG) serves as a coordination point for NAD(+).

It belongs to the mannitol dehydrogenase family.

The catalysed reaction is D-mannitol 1-phosphate + NAD(+) = beta-D-fructose 6-phosphate + NADH + H(+). The polypeptide is Mannitol-1-phosphate 5-dehydrogenase (Salmonella enteritidis PT4 (strain P125109)).